Here is a 391-residue protein sequence, read N- to C-terminus: Sister chromatid cohesion protein DCC1 (391 aa).

The protein belongs to the DCC1 family. Component of the ctf18-RFC complex which consists of ctf18, ctf8, dscc1 and the RFC complex.

It localises to the nucleus. Functionally, loads pcna onto primed templates regulating velocity, spacing and restart activity of replication forks. May couple DNA replication to sister chromatid cohesion. This is Sister chromatid cohesion protein DCC1 (dscc1) from Xenopus tropicalis (Western clawed frog).